A 195-amino-acid chain; its full sequence is Thymidine kinase (195 aa).

Residues 9 to 16 (STMNAGKS) and 87 to 90 (DEAQ) each bind ATP. The active-site Proton acceptor is the Glu-88. 4 residues coordinate Zn(2+): Cys-145, Cys-147, Cys-182, and His-185.

It belongs to the thymidine kinase family. Homotetramer.

The protein localises to the cytoplasm. It catalyses the reaction thymidine + ATP = dTMP + ADP + H(+). The sequence is that of Thymidine kinase from Jannaschia sp. (strain CCS1).